The sequence spans 287 residues: Nucleotide-binding protein Ajs_0902 (287 aa).

10-17 (GMSGSGKS) contacts ATP. 59-62 (DVRS) serves as a coordination point for GTP.

It belongs to the RapZ-like family.

In terms of biological role, displays ATPase and GTPase activities. The chain is Nucleotide-binding protein Ajs_0902 from Acidovorax sp. (strain JS42).